We begin with the raw amino-acid sequence, 296 residues long: Bifunctional protein FolD 1/3 (296 aa).

Residues 166-168, serine 191, and isoleucine 232 contribute to the NADP(+) site; that span reads GRS.

Belongs to the tetrahydrofolate dehydrogenase/cyclohydrolase family. In terms of assembly, homodimer.

It catalyses the reaction (6R)-5,10-methylene-5,6,7,8-tetrahydrofolate + NADP(+) = (6R)-5,10-methenyltetrahydrofolate + NADPH. The enzyme catalyses (6R)-5,10-methenyltetrahydrofolate + H2O = (6R)-10-formyltetrahydrofolate + H(+). It functions in the pathway one-carbon metabolism; tetrahydrofolate interconversion. Functionally, catalyzes the oxidation of 5,10-methylenetetrahydrofolate to 5,10-methenyltetrahydrofolate and then the hydrolysis of 5,10-methenyltetrahydrofolate to 10-formyltetrahydrofolate. In Ruegeria pomeroyi (strain ATCC 700808 / DSM 15171 / DSS-3) (Silicibacter pomeroyi), this protein is Bifunctional protein FolD 1/3.